The primary structure comprises 211 residues: Stromal cell-derived factor 2 (211 aa).

An N-terminal signal peptide occupies residues 1 to 18; it reads MAVVSLLLFGGLWSAVGS. 3 consecutive MIR domains span residues 21 to 75, 83 to 138, and 139 to 193; these read LAVV…IRGK, GTPI…VLCN, and GPYW…AMEG.

It localises to the secreted. This is Stromal cell-derived factor 2 (SDF2) from Bos taurus (Bovine).